A 314-amino-acid chain; its full sequence is tRNA uridine(34) hydroxylase (314 aa).

Residues 135-229 form the Rhodanese domain; that stretch reads SDPDTIVIDT…YLEEVPEEES (95 aa). The active-site Cysteine persulfide intermediate is Cys189.

Belongs to the TrhO family.

The enzyme catalyses uridine(34) in tRNA + AH2 + O2 = 5-hydroxyuridine(34) in tRNA + A + H2O. Catalyzes oxygen-dependent 5-hydroxyuridine (ho5U) modification at position 34 in tRNAs. This Agrobacterium fabrum (strain C58 / ATCC 33970) (Agrobacterium tumefaciens (strain C58)) protein is tRNA uridine(34) hydroxylase.